An 87-amino-acid chain; its full sequence is MKTKLNELLEFPCPFTYKVMGIAEPQLVNQVVEVVQRHAPGDYTPEVKPSSKGNYHSVSITITATHIDQVETLYEELGNLELVRMVL.

It belongs to the UPF0250 family.

In Yersinia enterocolitica serotype O:8 / biotype 1B (strain NCTC 13174 / 8081), this protein is UPF0250 protein YE3006.